The sequence spans 265 residues: Transcription factor LBX1 (265 aa).

Residues 1–20 (MTSKDEAKSSSVEERRRHAL) are compositionally biased toward basic and acidic residues. The segment at 1–33 (MTSKDEAKSSSVEERRRHALDLLPPPANSNKPL) is disordered. The segment at residues 125 to 184 (RRKSRTAFTNHQIYELEKRFLYQKYLSPADRDQIAQQLGLTNAQVITWFQNRRAKLKRDL) is a DNA-binding region (homeobox). Residues 212–265 (EEETNSVRDDSRSRSPQLGLSGHMPLSPSSPLTEQHTSKECSEDEEDVEIDVDD) are disordered. Residues 253 to 265 (SEDEEDVEIDVDD) show a composition bias toward acidic residues.

The protein resides in the nucleus. Functionally, transcription factor that controls hypaxial muscle development by down-regulating myod1 and cdkn1b/p27, thereby allowing myoblasts to proliferate before the onset of terminal differentiation. The polypeptide is Transcription factor LBX1 (Xenopus tropicalis (Western clawed frog)).